The primary structure comprises 2151 residues: MEKYREIHRDLQSFPVGSLTAVECIDYLDRLYAIRHDIVDQMIKHDWSDNKDSEESIGKVLLFAGVPNNVITAMEKKIIPDHPSGKTLRSFFKMTPDNYKITGSTIEFVEVTVTVDVDKGIREKRLKYEAGLKYIEQELHNHFLRGDIPQPYKITFQVVSVRTDGSNISTQWPSRRNDGVVQYMRLVQAEISYVREHLIRQEERAALEAMFNLKFNISNIKNQPYYIPDYRGIPLIHPNINDLVVYMRDWLSKSHKFSFHEGKVPAVFDCFNENELEHAVKYPISRHPRNFLLIQCSLLSSYNPATILSDQVDSRRACNSVLNLIPETPTSFLIHDMAYRYINLTREDMVSFYAPKTQFIPTQNVKEPGTFKLTANSMRPESKAMLDMLGSHEPGEKKGALIESLNLSSHIVQSECVSLITKILSDLELNISEPTSHGSFTTKHTYVDNVLEKFFQNEIQRYLLDVLKKTTAWHIGHLIRDITESLIAHSGLKRSKYWSVHAYNNGNVILFILPSKSLEVAGSYIRFVTVFRMGPGLVDKDNLDTILTDQDVTWGVSKVMSIDLNRLLALNIAFEKALIATATWFQYYTEDQGQFPLQHAIRSVFAYHLLLAVCQKMKLCAIFDNLRYLIPAVTSLYSGFPSLINKLFERPFKSALEVYVYYNIKSLLVALAQNNKARFYSKVKLLGLTVDQSTVGASGIYPSFMSRVIYKHYRSLISEVTTCFFLFEKGLHGNMNEEAKIHLETVEWALKFRQKEDQYGESMVENGYTIGELNDNQDLVEQQLYCQDAVELAAVELNKILSTKSQVVANSILNKYWEVPYFSQTRNISLKGMSGQVQEDGHLAASVTIIEAIRYLSSSQNNPSVLQLYEETRKVKAQARIVRKYQRTEADRGFFITTLPTRCRLEIIEDYYDAISKNVAEEYISYGGERKILCIQSALEKALRWASGESFIELSNGKFIRMKRKLMYVSADATKWSPGDNSAKFRRFTAALHNGLPDDRLKNCVIDALRNVYKTDFYMSRKLRAYIDNMNGHEPAVKNFLEFFPDGHCGEVRGNWLQGNLNKCSSLFGVGMSLLFKQLWNELFPELDCFFEFAHHSDDALFIYGYLEPIDDGTDWFLYVSQQIQAGHLHWFSVNTEMWKSMFNLHEHVLLLGSIKISPKKTTLSPTNAEFLSTFFESCAVSIPFIKILLGSLSDLPGLGYFDDLAAAQSRCVKAMDLGASPQVAQLAVALCTNKVERLYGTAVGMIKHPSTYLQVKHGDTPIPLGGSGAMSIMELATAGIGMSDKNLLKRALLGYIHKRQKNMAYILGLFKFLMNLSKDTFQHERLGEFSFIGKVQWKIFIPKSEFEFFDMYTPKFLKLWSEQHVTYDYIIPKGRDNLLIYLVRKINDPSIVTAMTMQSPLQLRFRMQAKQHMKVCKLDDDWVTFREILAAANSFAQLYEVTQEDLDLFQTLTSCTFSKEYAWKDFLNGVQCDVIPTKQIQRAKVARTFTVREKDQIIQNSIPAVIGYKFAVTVDEMSDVLDSAKFPDSLAVDLKTMKDGVYRELGLDISQAEVMKKVAPMLYKSSKSRVVIVQGNVEGTAEAICGYWLRTMSLVKTIRVKPHKEVLKAVSIFNRKEDIGQQKDLAALRLCIEVWRWCKANNAPYQEWFHALWFEDKTFSEWLDRFIRVGVPPVDPEIQCAALMIADIRGDLSVLQVQANRRAYSGKQYDAYCVQTYNEETKLYEGDLRVTFNFGLDCARLEIFWDKQTYILETSITQKHVLKIMMDEVTKELLRCGMRFKTEQVSNVKHLVLFKTEAGFEWGKPNIPCIVYKNCALRTGLRANQTVNHKFMISIKDNGLRAIAQYDDESPRFLLAHAFHTIRDIRYQAVDAVSNVWFIHKGIKLFLNPIISSGLLENFMKNLPAAIPPAAYSLIMNRAKISVDLFMFNDLLRLINPSNTLDLSGLQPTEDGFSTVSSMSSRLWSEEVSFVDEDEEIDDEFTIDLQDVDFENIDVEADIEHFLQDESSYTGDLLIMSEETEVKKMRGIIKLLEPVRLIKSWVSKGLCIEKVYSPTNIILMTRYLSKNFNFSGRQVSLLDPYDLTEFESIVKGWGECVVDQFSTFDQETQLLVSQKGICPEDVVPDSLFSFRHTIVLLRRLFPQDSVSTFY.

Residues histidine 36, glutamate 54, aspartate 97, glutamate 110, and valine 111 each contribute to the Mn(2+) site. The active-site For endonuclease activity is lysine 124. The RdRp catalytic domain occupies 956-1142 (NGKFIRMKRK…SVNTEMWKSM (187 aa)). Aspartate 1099 is a binding site for Mg(2+).

This sequence belongs to the Bunyavirales RNA polymerase family. As to quaternary structure, interacts with the viral nucleoprotein. Mn(2+) is required as a cofactor. The cofactor is Mg(2+).

The protein resides in the host cytoplasm. It localises to the host perinuclear region. It carries out the reaction RNA(n) + a ribonucleoside 5'-triphosphate = RNA(n+1) + diphosphate. Its function is as follows. RNA-dependent RNA polymerase, which is responsible for the replication and transcription of the viral RNA genome using antigenomic RNA as an intermediate. During transcription, synthesizes subgenomic RNAs and assures their capping by a cap-snatching mechanism, which involves the endonuclease activity cleaving the host capped pre-mRNAs. These short capped RNAs are then used as primers for viral transcription. Cleaves ssRNA substrates but not DNA. Seems to downregulate the expression of its own and heterologous mRNAs through its endonuclease activity. The chain is RNA-directed RNA polymerase L from Apodemus agrarius (Eurasian field mouse).